The sequence spans 1723 residues: Lymphocyte antigen 75 (1723 aa).

A signal peptide spans 1 to 27 (MRTGRVTPGLAAGLLLLLLRSFGLVEP). Over 28 to 1667 (SESSGNDPFT…AVCKIPLSPD (1640 aa)) the chain is Extracellular. Residues 33–182 (NDPFTIVHEN…FLIGETWYHD (150 aa)) enclose the Ricin B-type lectin domain. N-linked (GlcNAc...) asparagine glycosylation is present at Asn-135. The region spanning 164–211 (SYGRPCEFPFLIGETWYHDCIHDEDHSGPWCATTLSYEYDQKWGICLL) is the Fibronectin type-II domain. Disulfide bonds link Cys-169-Cys-194, Cys-183-Cys-209, Cys-247-Cys-340, and Cys-317-Cys-332. The C-type lectin 1 domain occupies 225–341 (QIGSCYQFNN…CESQQPYVCK (117 aa)). Asn-345 and Asn-377 each carry an N-linked (GlcNAc...) asparagine glycan. C-type lectin domains follow at residues 368–486 (NNGF…YVCK), 493–625 (KDAE…ICKK), and 652–791 (SSLS…WVCQ). 2 cysteine pairs are disulfide-bonded: Cys-389–Cys-485 and Cys-462–Cys-477. Asn-529 carries an N-linked (GlcNAc...) asparagine glycan. 3 disulfides stabilise this stretch: Cys-597–Cys-614, Cys-678–Cys-790, and Cys-752–Cys-782. Asn-843 and Asn-865 each carry an N-linked (GlcNAc...) asparagine glycan. Phosphotyrosine is present on Tyr-934. 3 N-linked (GlcNAc...) asparagine glycosylation sites follow: Asn-935, Asn-1077, and Asn-1104. Residues 959-1092 (FQNKCFLKVN…ERHSLSLCQK (134 aa)) form the C-type lectin 5 domain. Cys-1061 and Cys-1081 are joined by a disulfide. Residues 1111–1223 (YLNNLYKIIS…DNQPGAICYY (113 aa)) enclose the C-type lectin 6 domain. The cysteines at positions 1198 and 1212 are disulfide-linked. N-linked (GlcNAc...) asparagine glycosylation is found at Asn-1226, Asn-1321, and Asn-1393. Residues 1252-1375 (FQNSCYNFMI…VIEETLHFYQ (124 aa)) enclose the C-type lectin 7 domain. 2 consecutive C-type lectin domains span residues 1402 to 1514 (YKDG…ICYK) and 1543 to 1662 (YGGH…VCKI). A disulfide bond links Cys-1489 and Cys-1503. Asn-1594 and Asn-1627 each carry an N-linked (GlcNAc...) asparagine glycan. A disulfide bond links Cys-1636 and Cys-1651. The helical transmembrane segment at 1668–1692 (YTGIAILFAVLCLLGLISLAIWFLL) threads the bilayer. Topologically, residues 1693 to 1723 (QRSHIRWTGFSSVRYEHGTNEDEVMLPSFHD) are cytoplasmic. Phosphoserine is present on residues Ser-1704 and Ser-1720.

Post-translationally, N-glycosylated. As to expression, expressed in dendritic and thymic epithelial cells and lymph nodes.

The protein localises to the membrane. Acts as an endocytic receptor to direct captured antigens from the extracellular space to a specialized antigen-processing compartment. Causes reduced proliferation of B lymphocytes. The protein is Lymphocyte antigen 75 (Ly75) of Mus musculus (Mouse).